The chain runs to 114 residues: 11.9 kDa wall protein (114 aa).

Residues 1 to 6 (MSFKTR) constitute a propeptide that is removed on maturation.

The protein resides in the secreted. It is found in the cell wall. May play a role in the structure of the hypha-forming fruit bodies. The chain is 11.9 kDa wall protein (TDF-1) from Tuber dryophilum (Truffle).